Here is a 176-residue protein sequence, read N- to C-terminus: Small ribosomal subunit protein uS5 (176 aa).

The 64-residue stretch at 11-74 (LSEVLVDVNR…QAAKKRMMKV (64 aa)) folds into the S5 DRBM domain.

It belongs to the universal ribosomal protein uS5 family. Part of the 30S ribosomal subunit. Contacts proteins S4 and S8.

Functionally, with S4 and S12 plays an important role in translational accuracy. Located at the back of the 30S subunit body where it stabilizes the conformation of the head with respect to the body. The protein is Small ribosomal subunit protein uS5 of Rickettsia massiliae (strain Mtu5).